The primary structure comprises 369 residues: Virulence factor-related M protein (369 aa).

The N-terminal stretch at 1–41 (MARQQTKKNYSLRKLKTGTASVAVALTVLGAGFANQTEVRA) is a signal peptide. C repeat units lie at residues 120–154 (AKAT…EAKH), 162–196 (KKLT…EAKY), and 211–246 (QKLE…TSEL). Basic and acidic residues-rich tracts occupy residues 125–165 (ENEI…KKLT), 202–219 (DHQA…DLPK), 228–243 (LSRD…KKVT), and 257–271 (EESK…AELQ). Disordered stretches follow at residues 125–189 (ENEI…RAAK) and 202–271 (DHQA…AELQ). Residues 129–200 (SEASRKGLSR…ELEAKYQKLE (72 aa)) form a 2 X repeats, type A region. Residues 132–241 (SRKGLSRDLE…LEASREANKK (110 aa)) form a 3 X repeats, type B region. D repeat units follow at residues 272-277 (AKLDAQ), 278-283 (GKALKE), 286-291 (AKQTEE), and 293-298 (AKLRAE). Residues 292–301 (LAKLRAEKAA) show a composition bias toward basic and acidic residues. Residues 292-341 (LAKLRAEKAAGSKTPATKPANKERSGRAAQTATRPSQNKGMRSQLPSTGE) form a disordered region. Residues 319–338 (AAQTATRPSQNKGMRSQLPS) are compositionally biased toward polar residues. Residues 336 to 340 (LPSTG) carry the LPXTG sorting signal motif. Thr339 carries the pentaglycyl murein peptidoglycan amidated threonine modification. Positions 340 to 369 (GEAANPFFTAAAATVMVSAGMLALKRKEEN) are cleaved as a propeptide — removed by sortase.

This sequence belongs to the M protein family.

Its subcellular location is the secreted. It is found in the cell wall. The polypeptide is Virulence factor-related M protein (ennX) (Streptococcus pyogenes serotype M49).